We begin with the raw amino-acid sequence, 630 residues long: Plastin-3 (630 aa).

2 consecutive EF-hand domains span residues 12-47 (DELD…ANMP) and 52-87 (KVRE…VKSS). Ca(2+) is bound by residues aspartate 25, asparagine 27, asparagine 29, glutamate 36, aspartate 65, asparagine 67, aspartate 69, lysine 71, and glutamate 76. Actin-binding regions lie at residues 109 to 382 (TSEL…ALTK) and 383 to 627 (PENQ…GRGM). Calponin-homology (CH) domains follow at residues 123 to 239 (EEEK…KIGL) and 267 to 378 (LSPE…NKYP). Phosphoserine occurs at positions 268, 293, 326, and 339. Threonine 391 is modified (phosphothreonine). Calponin-homology (CH) domains are found at residues 397–506 (TREE…RRYT) and 518–627 (KAND…GRGM).

In terms of assembly, monomer. In terms of tissue distribution, expressed in a variety of organs, including muscle, brain, uterus and esophagus.

It localises to the cytoplasm. Actin-bundling protein. The protein is Plastin-3 (PLS3) of Homo sapiens (Human).